The primary structure comprises 156 residues: uncharacterized protein (156 aa).

A signal peptide spans 1-22 (MFGKVSSLLVFASFLIIQGAFA). Serine 129 carries the GPI-anchor amidated serine lipid modification. Residues 130 to 156 (GSPVRFSKSSLLIVSLLSIAAFAALVL) constitute a propeptide, removed in mature form.

It localises to the cell membrane. This is an uncharacterized protein from Schizosaccharomyces pombe (strain 972 / ATCC 24843) (Fission yeast).